We begin with the raw amino-acid sequence, 374 residues long: Protein TAB2 homolog, chloroplastic (374 aa).

Residues 1–64 constitute a chloroplast transit peptide; sequence MATLGFNTRR…SLSITKEQEV (64 aa). Residues 58–84 are disordered; it reads ITKEQEVANEVEEDDPTSELSYLDPES. Residues 64–74 are compositionally biased toward acidic residues; that stretch reads VANEVEEDDPT.

Its subcellular location is the plastid. The protein localises to the chloroplast. Its function is as follows. Nuclear genome-encoded A/U-rich RNA-binding protein involved in the biogenesis of photosystem I (PSI) and II (PSII). Required for the light-controlled accumulation of PSI and PSII during early plant development. Does not seem to be required for the translation of mRNAs of the PSI subunits. This is Protein TAB2 homolog, chloroplastic from Arabidopsis thaliana (Mouse-ear cress).